We begin with the raw amino-acid sequence, 372 residues long: uncharacterized protein (372 aa).

A signal peptide spans 1–24 (MSYYQIIVCILASISYIILLEVIA). The 124-residue stretch at 92–215 (PNRNDTDASY…SSYNLLWSDL (124 aa)) folds into the PA domain. A helical membrane pass occupies residues 236-256 (FWPFLLCFSPSIIMLITVQAL). Residue Ser-280 is modified to Phosphoserine. An RING-type; atypical zinc finger spans residues 321-363 (CVICLESFTKGDKVVALPCKHEFHRPCIAKWIVDYRHACPTCN).

The protein resides in the golgi apparatus membrane. It is found in the vacuole membrane. This is an uncharacterized protein from Schizosaccharomyces pombe (strain 972 / ATCC 24843) (Fission yeast).